A 101-amino-acid chain; its full sequence is Small ribosomal subunit protein uS14 (101 aa).

The segment at 1–26 (MAKVSSIKKNESRKKKSQSLHNKRSA) is disordered. Over residues 11-26 (ESRKKKSQSLHNKRSA) the composition is skewed to basic residues.

This sequence belongs to the universal ribosomal protein uS14 family. As to quaternary structure, part of the 30S ribosomal subunit. Contacts proteins S3 and S10.

In terms of biological role, binds 16S rRNA, required for the assembly of 30S particles and may also be responsible for determining the conformation of the 16S rRNA at the A site. The chain is Small ribosomal subunit protein uS14 from Rickettsia felis (strain ATCC VR-1525 / URRWXCal2) (Rickettsia azadi).